The following is a 63-amino-acid chain: Sec-independent protein translocase protein TatA (63 aa).

Residues 1 to 21 (MGSFSMWHWLIVLVIVLLLFG) form a helical membrane-spanning segment. The disordered stretch occupies residues 42–63 (GMTDDDAPDTAKTVDHKADETK). The span at 53 to 63 (KTVDHKADETK) shows a compositional bias: basic and acidic residues.

This sequence belongs to the TatA/E family. As to quaternary structure, the Tat system comprises two distinct complexes: a TatABC complex, containing multiple copies of TatA, TatB and TatC subunits, and a separate TatA complex, containing only TatA subunits. Substrates initially bind to the TatABC complex, which probably triggers association of the separate TatA complex to form the active translocon.

The protein resides in the cell inner membrane. Part of the twin-arginine translocation (Tat) system that transports large folded proteins containing a characteristic twin-arginine motif in their signal peptide across membranes. TatA could form the protein-conducting channel of the Tat system. This chain is Sec-independent protein translocase protein TatA, found in Rhizobium etli (strain CIAT 652).